The sequence spans 359 residues: Peptide chain release factor 1 (359 aa).

Q235 carries the post-translational modification N5-methylglutamine. Positions 287–312 are disordered; it reads AQEASAMRSAQVGSGDRSERIRTYNF.

The protein belongs to the prokaryotic/mitochondrial release factor family. In terms of processing, methylated by PrmC. Methylation increases the termination efficiency of RF1.

Its subcellular location is the cytoplasm. Its function is as follows. Peptide chain release factor 1 directs the termination of translation in response to the peptide chain termination codons UAG and UAA. The protein is Peptide chain release factor 1 of Chlamydia trachomatis serovar A (strain ATCC VR-571B / DSM 19440 / HAR-13).